Here is a 157-residue protein sequence, read N- to C-terminus: Baculoviral IAP repeat-containing protein 5.2-B (157 aa).

A BIR repeat occupies 31 to 101 (RLRTFSNWPF…KHSPSCLFIA (71 aa)). A Phosphothreonine; by CDK1 modification is found at T47. Zn(2+)-binding residues include C70, C73, H90, and C97.

The protein belongs to the IAP family. As to quaternary structure, component of the CPC at least composed of survivin/birc5, incenp, cdca8/borealin and/or cdca9/dasra-A, and aurkb/aurora-B. Interacts directly with incenp (via N-terminus). Interacts with rxra; the interaction is stronger in the absence of 9-cis retinoic acids. Post-translationally, ubiquitination is required for centrosome-targeting. As to expression, exhibits strong and homogeneous expression in developing oocytes. In embryos, expressed in the animal hemisphere from one-cell to yolk plug stages, and highly expressed in the future brain and dorsal region of the neural tube at the neurula stage and early tail-bud stage. At tadpole stages, expression is restricted at a low level to the head region.

The protein localises to the cytoplasm. It localises to the nucleus. It is found in the chromosome. Its subcellular location is the centromere. The protein resides in the cytoskeleton. The protein localises to the spindle. Does not appear to exhibit anti-apoptotic activity. Plays a role in increasing blood vessel size during development. Component of the chromosomal passenger complex (CPC), a complex that acts as a key regulator of mitosis. The CPC complex has essential functions at the centromere in ensuring correct chromosome alignment and segregation and is required for chromatin-induced microtubule stabilization and spindle assembly. This is Baculoviral IAP repeat-containing protein 5.2-B (birc5.2-b) from Xenopus laevis (African clawed frog).